A 353-amino-acid chain; its full sequence is Inactive ubiquitin thioesterase OTULINL (353 aa).

The segment at 1-80 (MEAPRSAPRE…KWWIGYLQRK (80 aa)) is required for membrane binding. One can recognise an OTU domain in the interval 125-353 (KCVRAVKRDN…NGHHYHIPVF (229 aa)).

This sequence belongs to the peptidase C65 family. Otulin subfamily. Does not bind ubiquitin or ubiquitin-like proteins.

It is found in the cytoplasm. The protein localises to the endoplasmic reticulum membrane. Its subcellular location is the nucleus envelope. Lacks deubiquitinase activity. This Mus musculus (Mouse) protein is Inactive ubiquitin thioesterase OTULINL.